We begin with the raw amino-acid sequence, 114 residues long: Aspartate 1-decarboxylase (114 aa).

S25 functions as the Schiff-base intermediate with substrate; via pyruvic acid in the catalytic mechanism. Position 25 is a pyruvic acid (Ser) (S25). T57 contributes to the substrate binding site. Y58 serves as the catalytic Proton donor. 71–73 (GAA) serves as a coordination point for substrate.

The protein belongs to the PanD family. In terms of assembly, heterooctamer of four alpha and four beta subunits. It depends on pyruvate as a cofactor. Post-translationally, is synthesized initially as an inactive proenzyme, which is activated by self-cleavage at a specific serine bond to produce a beta-subunit with a hydroxyl group at its C-terminus and an alpha-subunit with a pyruvoyl group at its N-terminus.

The protein resides in the cytoplasm. It carries out the reaction L-aspartate + H(+) = beta-alanine + CO2. The protein operates within cofactor biosynthesis; (R)-pantothenate biosynthesis; beta-alanine from L-aspartate: step 1/1. Catalyzes the pyruvoyl-dependent decarboxylation of aspartate to produce beta-alanine. The polypeptide is Aspartate 1-decarboxylase (Haloquadratum walsbyi (strain DSM 16790 / HBSQ001)).